A 206-amino-acid chain; its full sequence is MSYTLPSLPYAYDALEPHFDKQTMEIHHTKHHQTYVNNANAALESLPEFANLPVEELITKLDQLPADKKTVLRNNAGGHANHSLFWKGLKKGTTLQGDLKAAIERDFGSVDNFKAEFEKAAASRFGSGWAWLVLKGDKLAVVSTANQDSPLMGEAISGASGFPILGLDVWEHAYYLKFQNRRPDYIKEFWNVVNWDEAAARFAAKK.

His-27, His-82, Asp-168, and His-172 together coordinate Mn(2+).

This sequence belongs to the iron/manganese superoxide dismutase family. Homodimer. The cofactor is Mn(2+).

The catalysed reaction is 2 superoxide + 2 H(+) = H2O2 + O2. Destroys superoxide anion radicals which are normally produced within the cells and which are toxic to biological systems. The protein is Superoxide dismutase [Mn] (sodA) of Escherichia coli O157:H7.